A 396-amino-acid chain; its full sequence is Putative nickel insertion protein (396 aa).

It belongs to the LarC family.

This is Putative nickel insertion protein from Methanosarcina mazei (strain ATCC BAA-159 / DSM 3647 / Goe1 / Go1 / JCM 11833 / OCM 88) (Methanosarcina frisia).